Here is a 475-residue protein sequence, read N- to C-terminus: tRNA-2-methylthio-N(6)-dimethylallyladenosine synthase (475 aa).

The MTTase N-terminal domain occupies 3–120 (KKLHIKTWGC…LPEMIDQIRA (118 aa)). Residues cysteine 12, cysteine 49, cysteine 83, cysteine 157, cysteine 161, and cysteine 164 each coordinate [4Fe-4S] cluster. The region spanning 143 to 375 (RADGPSAFVS…QDRITQQAMR (233 aa)) is the Radical SAM core domain. The 64-residue stretch at 378–441 (RQMVGTVQRI…TNSLRGVFIR (64 aa)) folds into the TRAM domain.

It belongs to the methylthiotransferase family. MiaB subfamily. As to quaternary structure, monomer. The cofactor is [4Fe-4S] cluster.

Its subcellular location is the cytoplasm. It carries out the reaction N(6)-dimethylallyladenosine(37) in tRNA + (sulfur carrier)-SH + AH2 + 2 S-adenosyl-L-methionine = 2-methylsulfanyl-N(6)-dimethylallyladenosine(37) in tRNA + (sulfur carrier)-H + 5'-deoxyadenosine + L-methionine + A + S-adenosyl-L-homocysteine + 2 H(+). Catalyzes the methylthiolation of N6-(dimethylallyl)adenosine (i(6)A), leading to the formation of 2-methylthio-N6-(dimethylallyl)adenosine (ms(2)i(6)A) at position 37 in tRNAs that read codons beginning with uridine. This chain is tRNA-2-methylthio-N(6)-dimethylallyladenosine synthase, found in Shewanella halifaxensis (strain HAW-EB4).